The chain runs to 129 residues: Transcription antitermination protein NusB (129 aa).

This sequence belongs to the NusB family.

Involved in transcription antitermination. Required for transcription of ribosomal RNA (rRNA) genes. Binds specifically to the boxA antiterminator sequence of the ribosomal RNA (rrn) operons. The polypeptide is Transcription antitermination protein NusB (Staphylococcus aureus (strain bovine RF122 / ET3-1)).